Reading from the N-terminus, the 77-residue chain is Probable Vpr-like protein (77 aa).

Positions 34–42 (LIRLLQGLL) match the Nuclear export signal motif. The short motif at 44 to 53 (RLRFRKPKSK) is the Nuclear localization signal element.

It is found in the virion. It localises to the host nucleus. Its function is as follows. Seems to function as a Vpr-like protein, since it mediates host cell cycle arrest in G2 phase. Cell cycle arrest creates a favorable environment for maximizing viral expression and production. This chain is Probable Vpr-like protein, found in Felidae (cat family).